Consider the following 352-residue polypeptide: Mitochondrial ubiquitin ligase activator of NFKB 1 (352 aa).

Over 1–8 the chain is Cytoplasmic; it reads MESGGRPS. A helical membrane pass occupies residues 9–29; that stretch reads LCQFILLGTTSVVTAALYSVY. Residues 30–238 lie on the Mitochondrial intermembrane side of the membrane; it reads RQKARVSQEL…LLQRQESSVR (209 aa). Lys-52 is covalently cross-linked (Glycyl lysine isopeptide (Lys-Gly) (interchain with G-Cter in ubiquitin)). A helical membrane pass occupies residues 239–259; it reads LWKVLALVFGFATCATLFFIL. The Cytoplasmic portion of the chain corresponds to 260 to 352; the sequence is RKQYLQRQER…ITRVIPLYNS (93 aa). Residues Lys-273 and Lys-299 each participate in a glycyl lysine isopeptide (Lys-Gly) (interchain with G-Cter in ubiquitin) cross-link. The RING-type zinc-finger motif lies at 302–340; the sequence is CVVCLSSFKSCVFLECGHVCSCTECYRALPEPKKCPICR.

In terms of assembly, homooligomer. Interacts with MAP3K7/TAK1. Interacts with UBC9. Interacts with and sumoylates DNM1L. Interacts with MAVS. Interacts with TP53 (via N-terminus); the interaction leads to ubiquitination and proteasomal degradation of TP53. Post-translationally, ubiquitinated by PRKN during mitophagy, leading to its degradation and enhancement of mitophagy. Deubiquitinated by USP30. Widely expressed with highest levels in the heart, skeletal muscle, placenta, kidney and liver. Barely detectable in colon and thymus.

It is found in the mitochondrion outer membrane. The protein resides in the peroxisome. The catalysed reaction is S-ubiquitinyl-[E2 ubiquitin-conjugating enzyme]-L-cysteine + [acceptor protein]-L-lysine = [E2 ubiquitin-conjugating enzyme]-L-cysteine + N(6)-ubiquitinyl-[acceptor protein]-L-lysine.. It functions in the pathway protein modification; protein ubiquitination. The protein operates within protein modification; protein sumoylation. Its function is as follows. Exhibits weak E3 ubiquitin-protein ligase activity. E3 ubiquitin ligases accept ubiquitin from an E2 ubiquitin-conjugating enzyme in the form of a thioester and then directly transfer the ubiquitin to targeted substrates. Can ubiquitinate AKT1 preferentially at 'Lys-284' involving 'Lys-48'-linked polyubiquitination and seems to be involved in regulation of Akt signaling by targeting phosphorylated Akt to proteasomal degradation. Mediates polyubiquitination of cytoplasmic TP53 at 'Lys-24' which targets TP53 for proteasomal degradation, thus reducing TP53 levels in the cytoplasm and mitochondrion. Proposed to preferentially act as a SUMO E3 ligase at physiological concentrations. Plays a role in the control of mitochondrial morphology by promoting mitochondrial fragmentation, and influences mitochondrial localization. Likely to promote mitochondrial fission through negatively regulating the mitochondrial fusion proteins MFN1 and MFN2, acting in a pathway that is parallel to the PRKN/PINK1 regulatory pathway. May also be involved in the sumoylation of the membrane fission protein DNM1L. Inhibits cell growth. When overexpressed, activates JNK through MAP3K7/TAK1 and induces caspase-dependent apoptosis. Involved in the modulation of innate immune defense against viruses by inhibiting RIGI-dependent antiviral response. Can mediate RIGI sumoylation and disrupt its polyubiquitination. In Homo sapiens (Human), this protein is Mitochondrial ubiquitin ligase activator of NFKB 1 (MUL1).